Consider the following 751-residue polypeptide: Catalase-peroxidase (751 aa).

A cross-link (tryptophyl-tyrosyl-methioninium (Trp-Tyr) (with M-266)) is located at residues 92–240 (WHSAGTYRVT…VAAAHMGLIY (149 aa)). The Proton acceptor role is filled by histidine 93. A cross-link (tryptophyl-tyrosyl-methioninium (Tyr-Met) (with W-92)) is located at residues 240–266 (YVNPEGPDGVPDPIAAARDIRTTFHRM). Residue histidine 281 participates in heme b binding.

Belongs to the peroxidase family. Peroxidase/catalase subfamily. As to quaternary structure, homodimer or homotetramer. Heme b serves as cofactor. Formation of the three residue Trp-Tyr-Met cross-link is important for the catalase, but not the peroxidase activity of the enzyme.

The protein localises to the cytoplasm. The enzyme catalyses H2O2 + AH2 = A + 2 H2O. It catalyses the reaction 2 H2O2 = O2 + 2 H2O. Bifunctional enzyme with both catalase and broad-spectrum peroxidase activity. This is Catalase-peroxidase from Phaeosphaeria nodorum (strain SN15 / ATCC MYA-4574 / FGSC 10173) (Glume blotch fungus).